Reading from the N-terminus, the 284-residue chain is 4-diphosphocytidyl-2-C-methyl-D-erythritol kinase (284 aa).

Lys14 is an active-site residue. Pro98 to Ser108 contributes to the ATP binding site. Asp140 is an active-site residue.

This sequence belongs to the GHMP kinase family. IspE subfamily.

It catalyses the reaction 4-CDP-2-C-methyl-D-erythritol + ATP = 4-CDP-2-C-methyl-D-erythritol 2-phosphate + ADP + H(+). The protein operates within isoprenoid biosynthesis; isopentenyl diphosphate biosynthesis via DXP pathway; isopentenyl diphosphate from 1-deoxy-D-xylulose 5-phosphate: step 3/6. Its function is as follows. Catalyzes the phosphorylation of the position 2 hydroxy group of 4-diphosphocytidyl-2C-methyl-D-erythritol. The chain is 4-diphosphocytidyl-2-C-methyl-D-erythritol kinase from Shewanella loihica (strain ATCC BAA-1088 / PV-4).